The primary structure comprises 200 residues: MIKEFRDLIDSMIPVGKVVKPHGLRGEVKMKSLTNQLKVFETLKKVLLYDEKAGTVVRAEIDTIRRAGKGYIVHFKGFKSVEAAERIRGFYVYAPLNVLPPLKEGEYYFYQLLDCEVYDPEGEYIGKVTDIIETGANDVIVVTKELPDFTVEEELIPVIKDYIVEFRFKDKKIVAKRLEYLTLEGKEDNDDENQRIDDIS.

One can recognise a PRC barrel domain in the interval 103 to 181 (KEGEYYFYQL…KIVAKRLEYL (79 aa)).

Belongs to the RimM family. In terms of assembly, binds ribosomal protein uS19.

Its subcellular location is the cytoplasm. Its function is as follows. An accessory protein needed during the final step in the assembly of 30S ribosomal subunit, possibly for assembly of the head region. Essential for efficient processing of 16S rRNA. May be needed both before and after RbfA during the maturation of 16S rRNA. It has affinity for free ribosomal 30S subunits but not for 70S ribosomes. This chain is Ribosome maturation factor RimM, found in Kosmotoga olearia (strain ATCC BAA-1733 / DSM 21960 / TBF 19.5.1).